Reading from the N-terminus, the 468-residue chain is Aspartate ammonia-lyase (468 aa).

Positions 101, 140, 141, 142, 187, and 188 each coordinate L-aspartate. An SS loop region spans residues 317–326; the sequence is GSSIMPGKVN. Ser318 (proton acceptor) is an active-site residue. Residues Ser319 and Lys324 each coordinate L-aspartate.

The protein belongs to the class-II fumarase/aspartase family. Aspartase subfamily. Homotetramer.

It catalyses the reaction L-aspartate = fumarate + NH4(+). Its activity is regulated as follows. Unlike E.coli aspartase, the enzyme is not activated by the presence of divalent metal ions at alkaline pH. In terms of biological role, catalyzes the reversible conversion of L-aspartate to fumarate and ammonia. Is highly specific for L-aspartate in the deamination reaction, and cannot use alternative substrates such as D-aspartic acid, alpha-methyl-DL-aspartic acid, beta-methyl-DL-aspartic acid or L-glutamate. In the reverse reaction, alternative nucleophiles (such as hydroxylamine, hydrazine, methoxylamine and methylamine) can replace ammonia in vitro, leading to the formation of N-substituted aspartic acid derivatives. In Bacillus sp, this protein is Aspartate ammonia-lyase.